The chain runs to 604 residues: 2-isopropylmalate synthase 2, mitochondrial (604 aa).

The N-terminal 50 residues, 1 to 50 (MVKHSFIALAEHASKLRRSIPPVKLTYKNMLRDPSVKYRAFAPPKMVKRI), are a transit peptide targeting the mitochondrion. In terms of domain architecture, Pyruvate carboxyltransferase spans 60-335 (PRWLSTDLRD…SPNLDFSDLT (276 aa)). Aspartate 69, histidine 274, histidine 276, and asparagine 310 together coordinate a divalent metal cation.

Belongs to the alpha-IPM synthase/homocitrate synthase family. LeuA type 2 subfamily. As to quaternary structure, homodimer. A divalent metal cation serves as cofactor.

It localises to the mitochondrion. It carries out the reaction 3-methyl-2-oxobutanoate + acetyl-CoA + H2O = (2S)-2-isopropylmalate + CoA + H(+). It participates in amino-acid biosynthesis; L-leucine biosynthesis; L-leucine from 3-methyl-2-oxobutanoate: step 1/4. Catalyzes the condensation of the acetyl group of acetyl-CoA with 3-methyl-2-oxobutanoate (2-oxoisovalerate) to form 3-carboxy-3-hydroxy-4-methylpentanoate (2-isopropylmalate). Redundant to LEU4, responsible for about 20% of alpha-IPMS activity. Involved in leucine synthesis. In Saccharomyces cerevisiae (strain ATCC 204508 / S288c) (Baker's yeast), this protein is 2-isopropylmalate synthase 2, mitochondrial.